The sequence spans 597 residues: Golgin subfamily A member 8C (597 aa).

2 disordered regions span residues 1 to 80 (MAEE…VPDS) and 96 to 120 (KQQK…QKAE). A compositionally biased stretch (polar residues) spans 38 to 50 (TNGSIHETATSGG). The segment covering 53–70 (SPGDSSSTSSSLHAPQSP) has biased composition (low complexity). Coiled coils occupy residues 81–141 (RSVK…NTDL), 199–255 (EWKL…SQEV), and 296–394 (SEVE…GKRL). A compositionally biased stretch (basic and acidic residues) spans 100 to 120 (KQVEHQLEEEKKANNEKQKAE). Disordered regions lie at residues 390–422 (LGKR…SGFM), 457–498 (PITK…GVAA), and 549–576 (PVQG…QEHP). Gly residues predominate over residues 470–483 (PGGGHHQAGPGQGG). Positions 553–563 (ETREGSPHDKP) are enriched in basic and acidic residues.

It belongs to the GOLGA8 family.

The chain is Golgin subfamily A member 8C (GOLGA8CP) from Homo sapiens (Human).